The sequence spans 258 residues: Acetylglutamate kinase (258 aa).

Substrate-binding positions include 41-42, Arg-63, and Asn-156; that span reads GG.

Belongs to the acetylglutamate kinase family. ArgB subfamily.

It is found in the cytoplasm. It carries out the reaction N-acetyl-L-glutamate + ATP = N-acetyl-L-glutamyl 5-phosphate + ADP. It functions in the pathway amino-acid biosynthesis; L-arginine biosynthesis; N(2)-acetyl-L-ornithine from L-glutamate: step 2/4. Catalyzes the ATP-dependent phosphorylation of N-acetyl-L-glutamate. The polypeptide is Acetylglutamate kinase (Geobacillus kaustophilus (strain HTA426)).